An 821-amino-acid polypeptide reads, in one-letter code: Ribonuclease R (821 aa).

Residues 267–593 (RVDLRALPLV…LLHRAIKYLI (327 aa)) form the RNB domain. Residues 652–733 (GEELEGVVAN…DDRQIDFELV (82 aa)) enclose the S1 motif domain. The interval 739–821 (LRGQGKTAKK…KSGKVRDKTK (83 aa)) is disordered. 2 stretches are compositionally biased toward basic and acidic residues: residues 748 to 764 (KRAD…KEAA) and 774 to 794 (TKSE…EGRS). The segment covering 795–814 (KPKKTKAPKKRKDQARKKSG) has biased composition (basic residues).

It belongs to the RNR ribonuclease family. RNase R subfamily.

The protein localises to the cytoplasm. The enzyme catalyses Exonucleolytic cleavage in the 3'- to 5'-direction to yield nucleoside 5'-phosphates.. Functionally, 3'-5' exoribonuclease that releases 5'-nucleoside monophosphates and is involved in maturation of structured RNAs. The sequence is that of Ribonuclease R from Vibrio cholerae serotype O1 (strain ATCC 39315 / El Tor Inaba N16961).